The primary structure comprises 907 residues: Protein translocase subunit SecA (907 aa).

ATP-binding positions include Gln87, 105 to 109 (GEGKT), and Asp513. Residues 841–853 (EAQRRAQAEEAAR) show a composition bias toward basic and acidic residues. Residues 841 to 907 (EAQRRAQAEE…KYKQCHGQIN (67 aa)) are disordered. Over residues 854 to 865 (RAQAQHASAQSQ) the composition is skewed to low complexity. The segment covering 872 to 887 (EGHHQPVVRDERKVGR) has biased composition (basic and acidic residues). Cys891, Cys893, Cys902, and His903 together coordinate Zn(2+).

The protein belongs to the SecA family. In terms of assembly, monomer and homodimer. Part of the essential Sec protein translocation apparatus which comprises SecA, SecYEG and auxiliary proteins SecDF-YajC and YidC. The cofactor is Zn(2+).

The protein localises to the cell inner membrane. The protein resides in the cytoplasm. The catalysed reaction is ATP + H2O + cellular proteinSide 1 = ADP + phosphate + cellular proteinSide 2.. In terms of biological role, part of the Sec protein translocase complex. Interacts with the SecYEG preprotein conducting channel. Has a central role in coupling the hydrolysis of ATP to the transfer of proteins into and across the cell membrane, serving both as a receptor for the preprotein-SecB complex and as an ATP-driven molecular motor driving the stepwise translocation of polypeptide chains across the membrane. The polypeptide is Protein translocase subunit SecA (Vibrio vulnificus (strain CMCP6)).